The sequence spans 635 residues: Iron transport multicopper oxidase FET3 (635 aa).

The signal sequence occupies residues 1 to 17 (MMVPLLLSTYFITAVYG). Topologically, residues 18–559 (ATHTFHWTTG…KSIPTGFTKK (542 aa)) are extracellular. Plastocyanin-like domains are found at residues 42-140 (ITCN…FVIE) and 190-292 (NLIL…LQLN). N-linked (GlcNAc...) asparagine glycosylation is found at Asn-70 and Asn-73. Residues His-77 and His-79 each contribute to the Cu cation site. A glycan (N-linked (GlcNAc...) asparagine) is linked at Asn-109. Cu cation-binding residues include His-122 and His-124. N-linked (GlcNAc...) asparagine glycans are attached at residues Asn-194, Asn-198, Asn-244, Asn-265, Asn-292, and Asn-359. The 120-residue stretch at 382 to 501 (NPFIYGTNTN…QGLAVVMVED (120 aa)) folds into the Plastocyanin-like 3 domain. Residues His-413, His-416, and His-418 each contribute to the Cu cation site. An N-linked (GlcNAc...) asparagine glycan is attached at Asn-443. The Cu cation site is built by His-483, Cys-484, His-485, and His-489. Residue Asn-535 is glycosylated (N-linked (GlcNAc...) asparagine). The chain crosses the membrane as a helical span at residues 560 to 580 (GIIAMTFSCLAGVLGITMIAI). The Cytoplasmic portion of the chain corresponds to 581-628 (YGFSEIPEPEIKVMRNLHLNPEDVLEKTSSSSVISASNSSSLEDSRNQ).

It belongs to the multicopper oxidase family. Requires Cu cation as cofactor.

The protein resides in the cell membrane. Functionally, iron transport multicopper ferroxidase required for Fe(2+) high affinity uptake. Required to oxidize Fe(2+) and release it from the transporter. Essential component of copper-dependent iron transport. The polypeptide is Iron transport multicopper oxidase FET3 (FET3) (Candida glabrata (strain ATCC 2001 / BCRC 20586 / JCM 3761 / NBRC 0622 / NRRL Y-65 / CBS 138) (Yeast)).